Reading from the N-terminus, the 99-residue chain is Protein Frey (99 aa).

A helical membrane pass occupies residues 13-29 (AGLSLFALYLVLAAALL). The interval 64–90 (RPKHPWPRGPRPLLSRAQQRKRDGPDM) is disordered.

As to quaternary structure, interacts with SPPL2C (via active sites); the interaction stabilizes FREY1 protein and inhibits SPPL2C proteolytic activity. Interacts with IZUMO1; the interaction retains IZUMO1 at the endoplasmic reticulum membrane and coordinates IZUMO1 complex assembly.

Its subcellular location is the endoplasmic reticulum membrane. Key regulator for male fertility expressed transiently in round spermatids where it recruits IZUMO1 at the endoplasmic reticulum (ER) membrane and coordinates the oolemmal binding multimeric complex (IZUMO1 complex) assembly. Upon complete assembly of the IZUMO1 complex, its ER retention is released, facilitating IZUMO1 complex export to the acrosome. Through the interaction with SPPL2C, inhibits its intramembrane protease activity directly accessing the catalytic center of an I-CLiP. This chain is Protein Frey (FREY1), found in Bos taurus (Bovine).